A 322-amino-acid polypeptide reads, in one-letter code: uncharacterized protein (322 aa).

The Radical SAM core domain maps to 34 to 286 (KFKQKIFKIP…QRLSKDKVPE (253 aa)). [4Fe-4S] cluster contacts are provided by cysteine 50, cysteine 58, and cysteine 61.

This sequence belongs to the radical SAM superfamily. It depends on [4Fe-4S] cluster as a cofactor.

This is an uncharacterized protein from Methanocaldococcus jannaschii (strain ATCC 43067 / DSM 2661 / JAL-1 / JCM 10045 / NBRC 100440) (Methanococcus jannaschii).